The following is a 284-amino-acid chain: Phosphonates import ATP-binding protein PhnC 1 (284 aa).

Positions 5 to 253 constitute an ABC transporter domain; sequence IEVRGLSKSF…MLRDLYGSEA (249 aa). 38 to 45 provides a ligand contact to ATP; the sequence is GASGSGKS.

The protein belongs to the ABC transporter superfamily. Phosphonates importer (TC 3.A.1.9.1) family. The complex is composed of two ATP-binding proteins (PhnC), two transmembrane proteins (PhnE) and a solute-binding protein (PhnD).

The protein localises to the cell inner membrane. The catalysed reaction is phosphonate(out) + ATP + H2O = phosphonate(in) + ADP + phosphate + H(+). Its function is as follows. Part of the ABC transporter complex PhnCDE involved in phosphonates import. Responsible for energy coupling to the transport system. The protein is Phosphonates import ATP-binding protein PhnC 1 of Cupriavidus metallidurans (strain ATCC 43123 / DSM 2839 / NBRC 102507 / CH34) (Ralstonia metallidurans).